We begin with the raw amino-acid sequence, 520 residues long: Pleckstrin homology domain-containing family A member 8 (520 aa).

The 93-residue stretch at 1 to 93 (MEGVLYKWTN…WLVALGSAKA (93 aa)) folds into the PH domain. At Thr139 the chain carries Phosphothreonine. At Ser145 the chain carries Phosphoserine. Position 153 is a phosphothreonine (Thr153). A compositionally biased stretch (basic and acidic residues) spans 275–285 (GEESLGNHDSD). The disordered stretch occupies residues 275–305 (GEESLGNHDSDLAQPELHSTSSSPESHWEED). A glycolipid transfer protein homology domain region spans residues 311–520 (TFFSTMNTSF…VHGLESDEVV (210 aa)).

Homodimer. Interacts with ARF1; the interaction together with phosphatidylinositol 4-phosphate binding is required for FAPP2 GlcCer transfer ability.

The protein localises to the cytoplasm. It localises to the golgi apparatus. It is found in the trans-Golgi network membrane. Its subcellular location is the membrane. Functionally, cargo transport protein that is required for apical transport from the trans-Golgi network (TGN). Transports AQP2 from the trans-Golgi network (TGN) to sites of AQP2 phosphorylation. Mediates the non-vesicular transport of glucosylceramide (GlcCer) from the trans-Golgi network (TGN) to the plasma membrane and plays a pivotal role in the synthesis of complex glycosphingolipids. Binding of both phosphatidylinositol 4-phosphate (PIP) and ARF1 are essential for the GlcCer transfer ability. Also required for primary cilium formation, possibly by being involved in the transport of raft lipids to the apical membrane, and for membrane tubulation. This chain is Pleckstrin homology domain-containing family A member 8 (PLEKHA8), found in Bos taurus (Bovine).